The following is a 376-amino-acid chain: MQWASILLLAGLCSLSWAQYEEDSHWWFQFLRNQQSTYDDPYDPYPYEPYEPYPYGGEEGPAYAYGSPPQPEPRDCPQECDCPPNFPTAMYCDNRNLKYLPFVPSRMKYVYFQNNQISSIQEGVFDNATGLLWIALHGNQITSDKVGKKVFSKLRHLERLYLDHNNLTRIPSPLPRSLRELHLDHNQISRVPNNALEGLENLTALYLHHNEIQEVGSSMKGLRSLILLDLSYNHLRKVPDGLPSALEQLYLEHNNVFSVPDSYFRGSPKLLYVRLSHNSLTNNGLASNTFNSSSLLELDLSYNQLQKIPPVSTNLENLYLQGNRINEFSISSFCTVVDVMNFSKLQVLRLDGNEIKRSAMPADAPLCLRLASLIEI.

Positions 1-18 are cleaved as a signal peptide; that stretch reads MQWASILLLAGLCSLSWA. Position 19 is a pyrrolidone carboxylic acid (glutamine 19). 9 positions are modified to sulfotyrosine: tyrosine 20, tyrosine 38, tyrosine 45, tyrosine 47, tyrosine 50, tyrosine 53, tyrosine 55, tyrosine 63, and tyrosine 65. Residues 67 to 105 form the LRRNT domain; the sequence is SPPQPEPRDCPQECDCPPNFPTAMYCDNRNLKYLPFVPS. 8 LRR repeats span residues 106–127, 130–151, 156–176, 177–198, 201–222, 224–245, 246–266, and 269–289; these read RMKY…VFDN, GLLW…KKVF, HLER…PLPR, SLRE…ALEG, NLTA…MKGL, SLIL…LPSA, LEQL…YFRG, and KLLY…ASNT. Residue asparagine 127 is glycosylated (N-linked (GlcNAc...) (keratan sulfate) asparagine). N-linked (GlcNAc...) (keratan sulfate) asparagine glycosylation is present at asparagine 166. Asparagine 201 carries N-linked (GlcNAc...) (keratan sulfate) asparagine glycosylation. An N-linked (GlcNAc...) (keratan sulfate) asparagine glycan is attached at asparagine 291. LRR repeat units lie at residues 294–315 and 316–335; these read SLLE…STNL and ENLY…SFCT. The cysteines at positions 334 and 367 are disulfide-linked. Asparagine 341 carries N-linked (GlcNAc...) asparagine glycosylation. Residues 344–365 form an LRR 11 repeat; the sequence is KLQVLRLDGNEIKRSAMPADAP.

Belongs to the small leucine-rich proteoglycan (SLRP) family. SLRP class II subfamily. Binds to type I and type II collagen. In terms of processing, binds keratan sulfate chains.

Its subcellular location is the secreted. The protein resides in the extracellular space. It localises to the extracellular matrix. In terms of biological role, affects the rate of fibrils formation. May have a primary role in collagen fibrillogenesis. The chain is Fibromodulin (FMOD) from Bos taurus (Bovine).